Reading from the N-terminus, the 161-residue chain is Zinc metalloproteinase/disintegrin (161 aa).

One can recognise a Peptidase M12B domain in the interval 1–72; sequence ERDLLVAVTM…ENPQCILNKH (72 aa). His-12 contacts Zn(2+). Glu-13 is a catalytic residue. Residues His-16 and His-22 each contribute to the Zn(2+) site. Cystine bridges form between Cys-27/Cys-51 and Cys-29/Cys-34. A propeptide spanning residues 73–88 is cleaved from the precursor; it reads LRTDTVSTPVSGNELL. The Disintegrin domain maps to 89–161; it reads EAGEECDCGT…ADCPRNRFHA (73 aa). 6 disulfide bridges follow: Cys-94–Cys-109, Cys-96–Cys-104, Cys-103–Cys-126, Cys-117–Cys-123, Cys-122–Cys-147, and Cys-135–Cys-154. Positions 139 to 141 match the Cell attachment site motif; sequence RGD.

It belongs to the venom metalloproteinase (M12B) family. P-II subfamily. P-IIa sub-subfamily. As to quaternary structure, monomer. Expressed by the venom gland.

It localises to the secreted. In terms of biological role, impairs hemostasis in the envenomed animal. Disintegrin: inhibit platelet aggregation induced by ADP, thrombin, platelet-activating factor and collagen. Acts by inhibiting fibrinogen interaction with platelet receptors GPIIb/GPIIIa (ITGA2B/ITGB3). The polypeptide is Zinc metalloproteinase/disintegrin (Bothrops jararaca (Jararaca)).